The chain runs to 257 residues: DNA repair protein RecO (257 aa).

This sequence belongs to the RecO family.

Functionally, involved in DNA repair and RecF pathway recombination. In Streptococcus sanguinis (strain SK36), this protein is DNA repair protein RecO.